The following is a 229-amino-acid chain: Enolase-phosphatase E1 (229 aa).

The protein belongs to the HAD-like hydrolase superfamily. MasA/MtnC family. As to quaternary structure, monomer. Requires Mg(2+) as cofactor.

The catalysed reaction is 5-methylsulfanyl-2,3-dioxopentyl phosphate + H2O = 1,2-dihydroxy-5-(methylsulfanyl)pent-1-en-3-one + phosphate. Its pathway is amino-acid biosynthesis; L-methionine biosynthesis via salvage pathway; L-methionine from S-methyl-5-thio-alpha-D-ribose 1-phosphate: step 3/6. It participates in amino-acid biosynthesis; L-methionine biosynthesis via salvage pathway; L-methionine from S-methyl-5-thio-alpha-D-ribose 1-phosphate: step 4/6. Its function is as follows. Bifunctional enzyme that catalyzes the enolization of 2,3-diketo-5-methylthiopentyl-1-phosphate (DK-MTP-1-P) into the intermediate 2-hydroxy-3-keto-5-methylthiopentenyl-1-phosphate (HK-MTPenyl-1-P), which is then dephosphorylated to form the acireductone 1,2-dihydroxy-3-keto-5-methylthiopentene (DHK-MTPene). The chain is Enolase-phosphatase E1 from Yersinia pseudotuberculosis serotype O:1b (strain IP 31758).